The chain runs to 158 residues: NAD(P)H-quinone oxidoreductase subunit J, chloroplastic (158 aa).

Belongs to the complex I 30 kDa subunit family. As to quaternary structure, NDH is composed of at least 16 different subunits, 5 of which are encoded in the nucleus.

The protein localises to the plastid. Its subcellular location is the chloroplast thylakoid membrane. The catalysed reaction is a plastoquinone + NADH + (n+1) H(+)(in) = a plastoquinol + NAD(+) + n H(+)(out). The enzyme catalyses a plastoquinone + NADPH + (n+1) H(+)(in) = a plastoquinol + NADP(+) + n H(+)(out). Its function is as follows. NDH shuttles electrons from NAD(P)H:plastoquinone, via FMN and iron-sulfur (Fe-S) centers, to quinones in the photosynthetic chain and possibly in a chloroplast respiratory chain. The immediate electron acceptor for the enzyme in this species is believed to be plastoquinone. Couples the redox reaction to proton translocation, and thus conserves the redox energy in a proton gradient. This is NAD(P)H-quinone oxidoreductase subunit J, chloroplastic from Dioscorea elephantipes (Elephant's foot yam).